The sequence spans 230 residues: UPF0173 metal-dependent hydrolase Rsph17029_0942 (230 aa).

Belongs to the UPF0173 family.

In Cereibacter sphaeroides (strain ATCC 17029 / ATH 2.4.9) (Rhodobacter sphaeroides), this protein is UPF0173 metal-dependent hydrolase Rsph17029_0942.